We begin with the raw amino-acid sequence, 198 residues long: Vacuolar iron transporter homolog 4 (198 aa).

Residues 1 to 32 lie on the Cytoplasmic side of the membrane; it reads MESNNNNLNLDMEKDQETTFDYSKRAQWLRAA. Residues 33 to 53 traverse the membrane as a helical segment; that stretch reads VLGANDGLVSTASLMMGIGAV. The Vacuolar segment spans residues 54–60; sequence KQDVRIM. The helical transmembrane segment at 61–81 threads the bilayer; sequence LLTGFAGLVAGACSMAIGEFI. Over 82–114 the chain is Cytoplasmic; that stretch reads SVYSQYDIEVAQMKRESGGETKKEKLPSPTQAA. Residues 115–135 form a helical membrane-spanning segment; the sequence is IASALAFTLGAIVPLLAAAFV. At 136–141 the chain is on the vacuolar side; sequence KEYKVR. The chain crosses the membrane as a helical span at residues 142 to 162; it reads IGVIVAAVTLALVMFGWLGAV. The Cytoplasmic segment spans residues 163 to 174; the sequence is LGKAPVVKSLVR. A helical transmembrane segment spans residues 175 to 195; sequence VLIGGWLAMAITFGFTKLVGS. Over 196–198 the chain is Vacuolar; sequence HGL.

Belongs to the CCC1 family.

It localises to the vacuole membrane. The catalysed reaction is Fe(2+)(in) = Fe(2+)(out). Functionally, probable vacuolar iron transporter that may be involved in the regulation of iron distribution throughout the plant. In Arabidopsis thaliana (Mouse-ear cress), this protein is Vacuolar iron transporter homolog 4.